The primary structure comprises 816 residues: Probable transcriptional regulator SLK2 (816 aa).

2 disordered regions span residues 133–153 (HDPSVQLGGSSATSLPTSQTN) and 166–189 (SFFQDPNNLTQARKKPRLDSKQDD). 2 stretches are compositionally biased toward polar residues: residues 139–153 (LGGSSATSLPTSQTN) and 166–176 (SFFQDPNNLTQ). The segment at 307 to 554 (PSESSIVYWR…DQKVGPIEAL (248 aa)) is dimerization. A Nuclear localization signal motif is present at residues 316–330 (RKFVTEYFSPRAKKR). Composition is skewed to polar residues over residues 644–662 (IQQEPSRNRSASPSYQGTS) and 672–711 (PSISGVSSHLSPQRQMPSSSYNGSTQQYHQQPPSCSSGNQ). The disordered stretch occupies residues 644–711 (IQQEPSRNRS…QPPSCSSGNQ (68 aa)).

This sequence belongs to the adn1/SEU family. In terms of assembly, forms corepressor complexes with LUH; LUH is the transcription repressor subunit and SLK2 the specific DNA-binding adapters. Expressed in young flower meristems, ovules and the carpel margin meristem.

It localises to the nucleus. In terms of biological role, probable transcription regulator that functions in the development of the carpel margin meristem similarly to SEUSS (SEU). In association with SEU, supports organ development from meristematic regions by facilitating auxin response and thus organ initiation, and by sustaining meristematic potential through the maintenance of PHABULOSA expression. DNA-binding adapter subunit of the SEU-SLK2 transcriptional corepressor of abiotic stress (e.g. salt and osmotic stress) response genes. This Arabidopsis thaliana (Mouse-ear cress) protein is Probable transcriptional regulator SLK2 (SLK2).